Reading from the N-terminus, the 65-residue chain is Neurotoxin Bot2 (65 aa).

The LCN-type CS-alpha/beta domain maps to 2 to 64 (RDAYIAQPEN…VPIRIEGKCH (63 aa)). Disulfide bonds link Cys12–Cys63, Cys16–Cys36, Cys22–Cys46, and Cys26–Cys48. Residue Phe65 is modified to Phenylalanine amide.

Belongs to the long (4 C-C) scorpion toxin superfamily. Sodium channel inhibitor family. Alpha subfamily. Expressed by the venom gland.

It is found in the secreted. In terms of biological role, binds to sodium channels (Nav) and inhibits the inactivation of the activated channels, thereby blocking neuronal transmission. This chain is Neurotoxin Bot2, found in Buthus occitanus tunetanus (Common European scorpion).